A 130-amino-acid chain; its full sequence is Glycoprotein hormone beta-5 (130 aa).

The N-terminal stretch at Met-1 to Gly-24 is a signal peptide. 5 cysteine pairs are disulfide-bonded: Cys-36/Cys-84, Cys-50/Cys-99, Cys-60/Cys-115, Cys-64/Cys-117, and Cys-120/Cys-127. Asn-87 carries an N-linked (GlcNAc...) asparagine glycan.

The protein belongs to the glycoprotein hormones subunit beta family. In terms of assembly, heterodimer with GPHA2; this heterodimer interacts with thyroid-stimulating hormone receptor (TSHR), and hence stimulates cAMP production. N-glycosylated. As to expression, highly expressed in brain and at low levels in pituitary. Also found in retina, testis and skin but not in pancreas, parotid, kidney, stomach, liver, colon, small intestine, thyroid, brain or adrenal gland. In pituitary, colocalizes with ACTH, suggesting that it is located in corticotrophs.

It is found in the secreted. Functions as a heterodimeric glycoprotein hormone with GPHA2 able to bind and activate the thyroid-stimulating hormone receptor (TSHR), leading to increased cAMP production. Plays a central role in controlling thyroid cell metabolism. The polypeptide is Glycoprotein hormone beta-5 (GPHB5) (Homo sapiens (Human)).